Here is a 319-residue protein sequence, read N- to C-terminus: Methionyl-tRNA formyltransferase (319 aa).

113–116 (SLLP) is a (6S)-5,6,7,8-tetrahydrofolate binding site.

The protein belongs to the Fmt family.

The catalysed reaction is L-methionyl-tRNA(fMet) + (6R)-10-formyltetrahydrofolate = N-formyl-L-methionyl-tRNA(fMet) + (6S)-5,6,7,8-tetrahydrofolate + H(+). Its function is as follows. Attaches a formyl group to the free amino group of methionyl-tRNA(fMet). The formyl group appears to play a dual role in the initiator identity of N-formylmethionyl-tRNA by promoting its recognition by IF2 and preventing the misappropriation of this tRNA by the elongation apparatus. This Pseudomonas fluorescens (strain ATCC BAA-477 / NRRL B-23932 / Pf-5) protein is Methionyl-tRNA formyltransferase.